The sequence spans 255 residues: Thiazole synthase (255 aa).

Lys96 functions as the Schiff-base intermediate with DXP in the catalytic mechanism. Residues Gly157, 183 to 184, and 205 to 206 each bind 1-deoxy-D-xylulose 5-phosphate; these read AG and NT.

This sequence belongs to the ThiG family. Homotetramer. Forms heterodimers with either ThiH or ThiS.

It is found in the cytoplasm. The enzyme catalyses [ThiS sulfur-carrier protein]-C-terminal-Gly-aminoethanethioate + 2-iminoacetate + 1-deoxy-D-xylulose 5-phosphate = [ThiS sulfur-carrier protein]-C-terminal Gly-Gly + 2-[(2R,5Z)-2-carboxy-4-methylthiazol-5(2H)-ylidene]ethyl phosphate + 2 H2O + H(+). Its pathway is cofactor biosynthesis; thiamine diphosphate biosynthesis. Catalyzes the rearrangement of 1-deoxy-D-xylulose 5-phosphate (DXP) to produce the thiazole phosphate moiety of thiamine. Sulfur is provided by the thiocarboxylate moiety of the carrier protein ThiS. In vitro, sulfur can be provided by H(2)S. The polypeptide is Thiazole synthase (Staphylococcus epidermidis (strain ATCC 12228 / FDA PCI 1200)).